We begin with the raw amino-acid sequence, 252 residues long: Chitooligosaccharide deacetylase (252 aa).

Mg(2+)-binding residues include His61 and His125.

It belongs to the YdjC deacetylase family. ChbG subfamily. In terms of assembly, homodimer. The cofactor is Mg(2+).

The protein resides in the cytoplasm. The enzyme catalyses N,N'-diacetylchitobiose + H2O = N-acetyl-beta-D-glucosaminyl-(1-&gt;4)-D-glucosamine + acetate. The catalysed reaction is diacetylchitobiose-6'-phosphate + H2O = N'-monoacetylchitobiose-6'-phosphate + acetate. It functions in the pathway glycan degradation; chitin degradation. Functionally, involved in the degradation of chitin. ChbG is essential for growth on the acetylated chitooligosaccharides chitobiose and chitotriose but is dispensable for growth on cellobiose and chitosan dimer, the deacetylated form of chitobiose. Deacetylation of chitobiose-6-P and chitotriose-6-P is necessary for both the activation of the chb promoter by the regulatory protein ChbR and the hydrolysis of phosphorylated beta-glucosides by the phospho-beta-glucosidase ChbF. Catalyzes the removal of only one acetyl group from chitobiose-6-P to yield monoacetylchitobiose-6-P, the inducer of ChbR and the substrate of ChbF. The sequence is that of Chitooligosaccharide deacetylase from Salmonella paratyphi C (strain RKS4594).